The primary structure comprises 228 residues: RNA chaperone ProQ (228 aa).

The tract at residues 107-178 (KARVQAQRAE…REEKHTPVSD (72 aa)) is disordered. 2 stretches are compositionally biased toward basic and acidic residues: residues 117–136 (QQAK…DAPR) and 146–175 (RRKE…KHTP).

Belongs to the ProQ family.

Its subcellular location is the cytoplasm. RNA chaperone with significant RNA binding, RNA strand exchange and RNA duplexing activities. May regulate ProP activity through an RNA-based, post-transcriptional mechanism. The sequence is that of RNA chaperone ProQ from Salmonella agona (strain SL483).